Consider the following 311-residue polypeptide: Formimidoylglutamase (311 aa).

Positions 130, 155, 157, 159, 242, and 244 each coordinate Mn(2+).

The protein belongs to the arginase family. Requires Mn(2+) as cofactor.

The enzyme catalyses N-formimidoyl-L-glutamate + H2O = formamide + L-glutamate. The protein operates within amino-acid degradation; L-histidine degradation into L-glutamate; L-glutamate from N-formimidoyl-L-glutamate (hydrolase route): step 1/1. In terms of biological role, catalyzes the conversion of N-formimidoyl-L-glutamate to L-glutamate and formamide. The sequence is that of Formimidoylglutamase from Staphylococcus aureus (strain Mu3 / ATCC 700698).